The sequence spans 1033 residues: Lethal(2) giant larvae protein homolog SRO7 (1033 aa).

The interval 16 to 45 (SLKGQNSETPIENSKASFKSKNSKTSTISK) is disordered. Over residues 18 to 27 (KGQNSETPIE) the composition is skewed to polar residues. Low complexity predominate over residues 28–45 (NSKASFKSKNSKTSTISK). 14 WD repeats span residues 81–114 (IAAA…VVIK), 121–156 (IKEM…TTVF), 161–197 (ITSI…SFKL), 216–249 (SIQW…KQSF), 274–309 (VIQS…IMAR), 333–397 (KISK…MKIF), 405–440 (IVNI…ETML), 464–538 (ATTS…FEVN), 552–631 (DKIS…STAV), 638–673 (TSAI…YMEN), 685–736 (VTCI…DITN), 745–799 (KIDA…THKG), 804–851 (LAAT…MSEH), and 865–888 (SVLR…STVK). Phosphoserine is present on residues Ser591 and Ser602. The tract at residues 953 to 984 (SFSERSSDDNNANHPEHQYTKPTRKGRNSSYG) is disordered.

The protein belongs to the WD repeat L(2)GL family. In terms of assembly, interacts with MYO2 and SEC9.

It is found in the cytoplasm. The protein localises to the cell membrane. Acts as an allosteric regulator of polarized exocytosis by promoting the targeted fusion of vesicles with the plasma membrane. Coordinates the spatial and temporal nature of both Rab-dependent tethering and SNARE-dependent membrane fusion of exocytic vesicles with the plasma membrane. Required for targeting of the sodium pumping ATPase ENA1 to the Cell Surface, thus being involved in maintenance of ion homeostasis in cells exposed to NaCl stress. May be involved in the targeting of the myosin proteins to their intrinsic pathways. Multicopy suppressor of RHO3. May also participate in the maintenance of cell polarity and bud growth. In Saccharomyces cerevisiae (strain ATCC 204508 / S288c) (Baker's yeast), this protein is Lethal(2) giant larvae protein homolog SRO7 (SRO7).